Here is a 632-residue protein sequence, read N- to C-terminus: Sporulenol synthase (632 aa).

The Proton donor role is filled by D377. PFTB repeat units follow at residues 395–436, 465–505, and 513–554; these read WERG…EDAA, IQRA…HACG, and IQKA…VQTA.

Belongs to the terpene cyclase/mutase family.

Its subcellular location is the cell membrane. It carries out the reaction sporulenol = (R)-tetraprenyl-beta-curcumene + H2O. It participates in secondary metabolite biosynthesis; hopanoid biosynthesis. In terms of biological role, catalyzes the cyclization of tetraprenyl beta-curcumene into sporulenol. The chain is Sporulenol synthase (sqhC) from Bacillus subtilis (strain 168).